A 409-amino-acid polypeptide reads, in one-letter code: Elongation factor Tu, chloroplastic (409 aa).

Residues 10-214 form the tr-type G domain; that stretch reads KPHVNIGTIG…AVDEYIPTPE (205 aa). Positions 19–26 are G1; it reads GHVDHGKT. A GTP-binding site is contributed by 19 to 26; sequence GHVDHGKT. Mg(2+) is bound at residue threonine 26. Positions 60–64 are G2; that stretch reads GITIN. Positions 81–84 are G3; the sequence is DCPG. Residues 81-85 and 136-139 each bind GTP; these read DCPGH and NKED. The G4 stretch occupies residues 136–139; it reads NKED. The tract at residues 174–176 is G5; that stretch reads SAL.

This sequence belongs to the TRAFAC class translation factor GTPase superfamily. Classic translation factor GTPase family. EF-Tu/EF-1A subfamily.

It localises to the plastid. The protein localises to the chloroplast. The catalysed reaction is GTP + H2O = GDP + phosphate + H(+). GTP hydrolase that promotes the GTP-dependent binding of aminoacyl-tRNA to the A-site of ribosomes during protein biosynthesis. This Phaeodactylum tricornutum (strain CCAP 1055/1) protein is Elongation factor Tu, chloroplastic (tufA).